Reading from the N-terminus, the 235-residue chain is Uridylate kinase (235 aa).

Residue Gly-10 to Ser-11 coordinates ATP. Gly-45 contributes to the UMP binding site. ATP-binding residues include Gly-46 and Arg-50. Residues Asp-67 and Val-115–Thr-121 contribute to the UMP site. Residues Thr-141, Tyr-147, and Asp-150 each contribute to the ATP site.

Belongs to the UMP kinase family. In terms of assembly, homohexamer.

It localises to the cytoplasm. It carries out the reaction UMP + ATP = UDP + ADP. The protein operates within pyrimidine metabolism; CTP biosynthesis via de novo pathway; UDP from UMP (UMPK route): step 1/1. Its activity is regulated as follows. Inhibited by UTP. Its function is as follows. Catalyzes the reversible phosphorylation of UMP to UDP. This chain is Uridylate kinase, found in Methanocorpusculum labreanum (strain ATCC 43576 / DSM 4855 / Z).